A 53-amino-acid chain; its full sequence is Metallocarboxypeptidase inhibitor b (53 aa).

3 cysteine pairs are disulfide-bonded: C9/C23, C15/C51, and C27/C38. A53 is a Zn(2+) binding site.

Its function is as follows. Metallocarboxypeptidase inhibitor. Has an inhibitory effect on bovine CPA1 and porcine CPB1. Does not inhibit D.melanogaster svr (carboxypeptidase D). Shows no activity against serine proteases subtilisin or bovine trypsin, cysteine protease papain, and aspartyl protease porcine pepsin. This chain is Metallocarboxypeptidase inhibitor b, found in Nerita versicolor (Four-tooth nerite).